The sequence spans 572 residues: Urease subunit alpha (572 aa).

One can recognise a Urease domain in the interval 136 to 572 (GGIDTHIHWI…VPLAQRYFLF (437 aa)). Positions 141, 143, and 224 each coordinate Ni(2+). Lysine 224 is modified (N6-carboxylysine). Position 226 (histidine 226) interacts with substrate. 2 residues coordinate Ni(2+): histidine 253 and histidine 279. Histidine 327 serves as the catalytic Proton donor. Aspartate 367 serves as a coordination point for Ni(2+).

It belongs to the metallo-dependent hydrolases superfamily. Urease alpha subunit family. In terms of assembly, heterotrimer of UreA (gamma), UreB (beta) and UreC (alpha) subunits. Three heterotrimers associate to form the active enzyme. The cofactor is Ni cation. Post-translationally, carboxylation allows a single lysine to coordinate two nickel ions.

It is found in the cytoplasm. It carries out the reaction urea + 2 H2O + H(+) = hydrogencarbonate + 2 NH4(+). It functions in the pathway nitrogen metabolism; urea degradation; CO(2) and NH(3) from urea (urease route): step 1/1. This is Urease subunit alpha from Actinobacillus pleuropneumoniae (Haemophilus pleuropneumoniae).